Reading from the N-terminus, the 195-residue chain is MAREAMIARTTNETSIQLSLSLDGEGKAELETGVPFLTHMLDLFAKHGQFDLHIEAKGDTHIDDHHTTEDIGICLGQAIKEALGDKKGIKRYGNAFVPMDDALAQVVIDLSNRPHFEFRGEFPAAKVGAFDVELVHEFLWKLALEARMNLHVIVHYGRNTHHMVEAVFKALGRALDEATMIDPRVKGVPSTKGML.

The protein belongs to the imidazoleglycerol-phosphate dehydratase family.

It localises to the cytoplasm. It carries out the reaction D-erythro-1-(imidazol-4-yl)glycerol 3-phosphate = 3-(imidazol-4-yl)-2-oxopropyl phosphate + H2O. It participates in amino-acid biosynthesis; L-histidine biosynthesis; L-histidine from 5-phospho-alpha-D-ribose 1-diphosphate: step 6/9. The polypeptide is Imidazoleglycerol-phosphate dehydratase (Geobacillus kaustophilus (strain HTA426)).